A 293-amino-acid polypeptide reads, in one-letter code: uncharacterized protein (293 aa).

Residues 65–89 (LQKYLENIKNKKLNLNKQSNNQTNN) adopt a coiled-coil conformation. The disordered stretch occupies residues 81–112 (KQSNNQTNNQTNNQTNNQTNNQTNNIRPQINN).

It localises to the virion. This is an uncharacterized protein from Acanthamoeba polyphaga mimivirus (APMV).